Reading from the N-terminus, the 61-residue chain is Cytotoxin 3 (61 aa).

4 cysteine pairs are disulfide-bonded: cysteine 3–cysteine 22, cysteine 15–cysteine 39, cysteine 43–cysteine 54, and cysteine 55–cysteine 60.

This sequence belongs to the three-finger toxin family. Short-chain subfamily. Type IB cytotoxin sub-subfamily. Expressed by the venom gland.

It localises to the secreted. In terms of biological role, this protein lyses red blood cells and has cardiotoxic and hypotensive activities. The sequence is that of Cytotoxin 3 from Hemachatus haemachatus (Rinkhals).